Consider the following 201-residue polypeptide: MNVPAPLPPCSILLLAGGRGQRMGGRDKGLIEWQGAALIEHLHRLTRPLTDDLIISCNRNIDRYARYADRLVQDDDTDFNGPLAGIRAALPLARHRWLLILPCDVPLVDAALLRALREKASEYPERPIMVREGQHWQPLLGMIPVAHAATLEAAWQAGERSPRRALEPLQPVALQLEAGDPRLANLNTPCLLTGISENRNK.

GTP is bound by residues 15–17, Lys-28, Asp-74, and Asp-104; that span reads LAG. Asp-104 is a binding site for Mg(2+).

It belongs to the MobA family. Monomer. The cofactor is Mg(2+).

Its subcellular location is the cytoplasm. It catalyses the reaction Mo-molybdopterin + GTP + H(+) = Mo-molybdopterin guanine dinucleotide + diphosphate. Its function is as follows. Transfers a GMP moiety from GTP to Mo-molybdopterin (Mo-MPT) cofactor (Moco or molybdenum cofactor) to form Mo-molybdopterin guanine dinucleotide (Mo-MGD) cofactor. This Pseudomonas syringae pv. syringae (strain B728a) protein is Molybdenum cofactor guanylyltransferase.